A 198-amino-acid polypeptide reads, in one-letter code: Probable GTP-binding protein EngB (198 aa).

Residues 21–195 (NFSEVAFLGR…EDIIINQTLG (175 aa)) enclose the EngB-type G domain. GTP-binding positions include 29–36 (GRSNVGKS), 56–60 (GKTQL), 81–84 (DLPG), 151–154 (TKCD), and 174–176 (VSN). S36 and T58 together coordinate Mg(2+).

Belongs to the TRAFAC class TrmE-Era-EngA-EngB-Septin-like GTPase superfamily. EngB GTPase family. Mg(2+) serves as cofactor.

In terms of biological role, necessary for normal cell division and for the maintenance of normal septation. The sequence is that of Probable GTP-binding protein EngB from Campylobacter jejuni subsp. jejuni serotype O:23/36 (strain 81-176).